The primary structure comprises 159 residues: 2-C-methyl-D-erythritol 2,4-cyclodiphosphate synthase (159 aa).

A divalent metal cation is bound by residues D10 and H12. Residues 10–12 and 36–37 each bind 4-CDP-2-C-methyl-D-erythritol 2-phosphate; these read DVH and HS. H44 lines the a divalent metal cation pocket. 4-CDP-2-C-methyl-D-erythritol 2-phosphate-binding positions include 58–60 and R144; that span reads DIG.

It belongs to the IspF family. Homotrimer. A divalent metal cation serves as cofactor.

The catalysed reaction is 4-CDP-2-C-methyl-D-erythritol 2-phosphate = 2-C-methyl-D-erythritol 2,4-cyclic diphosphate + CMP. Its pathway is isoprenoid biosynthesis; isopentenyl diphosphate biosynthesis via DXP pathway; isopentenyl diphosphate from 1-deoxy-D-xylulose 5-phosphate: step 4/6. In terms of biological role, involved in the biosynthesis of isopentenyl diphosphate (IPP) and dimethylallyl diphosphate (DMAPP), two major building blocks of isoprenoid compounds. Catalyzes the conversion of 4-diphosphocytidyl-2-C-methyl-D-erythritol 2-phosphate (CDP-ME2P) to 2-C-methyl-D-erythritol 2,4-cyclodiphosphate (ME-CPP) with a corresponding release of cytidine 5-monophosphate (CMP). The chain is 2-C-methyl-D-erythritol 2,4-cyclodiphosphate synthase from Paraburkholderia phymatum (strain DSM 17167 / CIP 108236 / LMG 21445 / STM815) (Burkholderia phymatum).